The primary structure comprises 46 residues: MGFFNKDKGKRSEKEKNVIQGALEDAGSALKDDPLQEAVQKKKNNR.

A disordered region spans residues 24–46 (EDAGSALKDDPLQEAVQKKKNNR).

The protein localises to the spore core. The polypeptide is Small, acid-soluble spore protein J (sspJ) (Bacillus subtilis (strain 168)).